Reading from the N-terminus, the 136-residue chain is Neuropeptide CCHamide-2 (136 aa).

Residues 1 to 24 form the signal peptide; that stretch reads MKSTISLLLVVICTVVLAAQQSQA. Cysteines 28 and 35 form a disulfide. Histidine amide is present on His39. The interval 42 to 78 is disordered; it reads RSLSPGSGSGTGVGGGMGEAASGGQEPDYVRPNGLLP. Residues 43 to 136 constitute a propeptide that is removed on maturation; the sequence is SLSPGSGSGT…ANSAELNGVN (94 aa). Positions 48 to 59 are enriched in gly residues; sequence SGSGTGVGGGMG.

As to expression, expressed in endocrine cells of the larval midgut (at protein level). Also expressed in endocrine cells of the midgut of adult males and females (at protein level). In the midgut, expression occurs mainly in the anterior region (at protein level). In the larval central nervous system, expressed in about 40 neurons in the brain hemispheres and ventral nerve cord (at protein level). Highly expressed in larval and adult gut with low levels in larval and adult brain. Very little expression in the larval fat body. However, another study shows high levels of expression in the larval fat body as well as the larval gut with low levels in the larval central nervous system.

It localises to the secreted. Ligand for the CCHamide-2 receptor CCHa2-R. In one study, shown to be an orexigenic peptide which induces appetite and stimulates food intake, leading to the release of insulin-like peptides which stimulate growth. In another study, shown to be a nutrient-sensitive peptide derived from peripheral tissues which controls growth by directly regulating the production and release of insulin-like peptides. The chain is Neuropeptide CCHamide-2 from Drosophila melanogaster (Fruit fly).